A 370-amino-acid polypeptide reads, in one-letter code: Homoserine kinase (370 aa).

The N-terminal 34 residues, 1–34 (MASLCFQSPSKPISYFQPKSNPSPPLFAKVSVFR), are a transit peptide targeting the chloroplast. Residue 143–154 (LPLGSGLGSSAA) participates in ATP binding.

It belongs to the GHMP kinase family. Homoserine kinase subfamily.

The protein resides in the plastid. The protein localises to the chloroplast stroma. It catalyses the reaction L-homoserine + ATP = O-phospho-L-homoserine + ADP + H(+). It functions in the pathway amino-acid biosynthesis; L-threonine biosynthesis; L-threonine from L-aspartate: step 4/5. Catalyzes the ATP-dependent phosphorylation of L-homoserine to L-homoserine phosphate. Is specific for L-homoserine and cannot use other substrates such D-serine, L-serine, D-threonine and L-threonine, galactose or D-homoserine in vitro. Required for susceptibility to the downy mildew pathogen Hyaloperonospora parasitica. This chain is Homoserine kinase (HSK), found in Arabidopsis thaliana (Mouse-ear cress).